The following is a 120-amino-acid chain: NAD(P)H-quinone oxidoreductase subunit 3 (120 aa).

A run of 3 helical transmembrane segments spans residues 10–30 (FLGF…TNLI), 64–84 (MFAL…PWAV), and 89–109 (LGLL…IALA).

It belongs to the complex I subunit 3 family. NDH-1 can be composed of about 15 different subunits; different subcomplexes with different compositions have been identified which probably have different functions.

The protein resides in the cellular thylakoid membrane. It carries out the reaction a plastoquinone + NADH + (n+1) H(+)(in) = a plastoquinol + NAD(+) + n H(+)(out). The catalysed reaction is a plastoquinone + NADPH + (n+1) H(+)(in) = a plastoquinol + NADP(+) + n H(+)(out). NDH-1 shuttles electrons from an unknown electron donor, via FMN and iron-sulfur (Fe-S) centers, to quinones in the respiratory and/or the photosynthetic chain. The immediate electron acceptor for the enzyme in this species is believed to be plastoquinone. Couples the redox reaction to proton translocation, and thus conserves the redox energy in a proton gradient. Cyanobacterial NDH-1 also plays a role in inorganic carbon-concentration. This chain is NAD(P)H-quinone oxidoreductase subunit 3, found in Prochlorococcus marinus subsp. pastoris (strain CCMP1986 / NIES-2087 / MED4).